Consider the following 478-residue polypeptide: Melanopsin (478 aa).

The segment covering 1–14 has biased composition (pro residues); sequence MNPPSGPRVPPSPT. The disordered stretch occupies residues 1 to 32; it reads MNPPSGPRVPPSPTQEPSCMATPAPPSWWDSS. At 1-72 the chain is on the extracellular side; it reads MNPPSGPRVP…VDVPDHAHYT (72 aa). The chain crosses the membrane as a helical span at residues 73–93; sequence LGTVILLVGLTGMLGNLTVIY. Topologically, residues 94–107 are cytoplasmic; sequence TFCRSRSLRTPANM. The chain crosses the membrane as a helical span at residues 108-128; it reads FIINLAVSDFLMSFTQAPVFF. Residues 129-144 are Extracellular-facing; it reads TSSLYKQWLFGETGCE. Cys143 and Cys221 are disulfide-bonded. The helical transmembrane segment at 145–165 threads the bilayer; the sequence is FYAFCGALFGISSMITLTAIA. Topologically, residues 166 to 188 are cytoplasmic; it reads LDRYLVITRPLATFGVASKRRAA. The chain crosses the membrane as a helical span at residues 189–209; sequence FVLLGVWLYALAWSLPPFFGW. Residues 210–238 are Extracellular-facing; it reads SAYVPEGLLTSCSWDYMSFTPAVRAYTML. Residues 239–259 traverse the membrane as a helical segment; the sequence is LCCFVFFLPLLIIIYCYIFIF. Residues 260 to 296 lie on the Cytoplasmic side of the membrane; sequence RAIRETGRALQTFGACKGNGESLWQRQRLQSECKMAK. A helical membrane pass occupies residues 297–317; the sequence is IMLLVILLFVLSWAPYSAVAL. The Extracellular portion of the chain corresponds to 318–332; it reads VAFAGYAHVLTPYMS. The helical transmembrane segment at 333–353 threads the bilayer; that stretch reads SVPAVIAKASAIHNPIIYAIT. Lys340 carries the post-translational modification N6-(retinylidene)lysine. Residues 354 to 478 are Cytoplasmic-facing; sequence HPKYRVAIAQ…GLIPSQDPRM (125 aa). The segment at 440–478 is disordered; the sequence is LYGQGLEDLEAKAPPRPQGHEAETPGKTKGLIPSQDPRM. The span at 448 to 465 shows a compositional bias: basic and acidic residues; the sequence is LEAKAPPRPQGHEAETPG.

It belongs to the G-protein coupled receptor 1 family. Opsin subfamily. As to expression, expressed in the retina.

The protein localises to the cell membrane. Its subcellular location is the cell projection. It localises to the axon. It is found in the dendrite. The protein resides in the perikaryon. In terms of biological role, photoreceptor that binds cis-retinaldehydes. Contributes to pupillar reflex, photoentrainment and other non-image forming responses to light. May be involved in the optokinetic visual tracking response. May be involved in the regulation of retinal hyaloid vessel growth and regression. This Homo sapiens (Human) protein is Melanopsin (OPN4).